Consider the following 485-residue polypeptide: Probable RNA-binding protein 46 (485 aa).

3 RRM domains span residues 61-139 (CEVF…VSLD), 141-223 (CRLF…WADP), and 236-308 (KVLY…LAKP).

As to quaternary structure, interacts with YTHDC2, MEIOC, MOV10, CNOT6L, DDX4, UPF1 and PABPC1.

Its subcellular location is the cytoplasm. In terms of biological role, essential for male and female fertility, playing a crucial role in regulating germ cell development by ensuring the proper progression of meiosis prophase I. Regulates mitotic-to-meiotic transition in spermatogenesis by forming a complex with MEIOC and YTHDC2 which recognizes and down-regulates mitotic transcripts for a successful meiotic entry. Required for normal synaptonemal complex formation during meiosis, binding meiotic cohesin subunit mRNAs containing GCCUAU/GUUCGA motifs in their 3'UTRs regions and positively regulating their translation. Required for spermatogonial differentiation in both developing and adult testis. This is Probable RNA-binding protein 46 (RBM46) from Macaca fascicularis (Crab-eating macaque).